The chain runs to 691 residues: Elongation factor G (691 aa).

The region spanning 8–283 (EDYRNFGIMA…AVVDYLPSPA (276 aa)) is the tr-type G domain. Residues 17–24 (AHIDAGKT), 81–85 (DTPGH), and 135–138 (NKMD) each bind GTP.

Belongs to the TRAFAC class translation factor GTPase superfamily. Classic translation factor GTPase family. EF-G/EF-2 subfamily.

The protein resides in the cytoplasm. Its function is as follows. Catalyzes the GTP-dependent ribosomal translocation step during translation elongation. During this step, the ribosome changes from the pre-translocational (PRE) to the post-translocational (POST) state as the newly formed A-site-bound peptidyl-tRNA and P-site-bound deacylated tRNA move to the P and E sites, respectively. Catalyzes the coordinated movement of the two tRNA molecules, the mRNA and conformational changes in the ribosome. The sequence is that of Elongation factor G from Methylobacterium sp. (strain 4-46).